An 889-amino-acid chain; its full sequence is Oxysterol-binding protein-related protein 8 (889 aa).

Position 1 is an N-acetylmethionine (Met1). The disordered stretch occupies residues 1-129 (MEAALADGEP…SLKVQKKNYR (129 aa)). Residues Ser14, Ser65, and Ser68 each carry the phosphoserine modification. Polar residues predominate over residues 62-71 (PSLSPASLHS). 3 stretches are compositionally biased toward basic and acidic residues: residues 73-88 (GFERGKEDISQNKDDS), 95-109 (SKSESKLYNGSEKDS), and 116-129 (TKKESLKVQKKNYR). The 118-residue stretch at 148–265 (VIVMADWLKI…WMDALELALK (118 aa)) folds into the PH domain. Phosphoserine is present on residues Ser314, Ser328, and Ser342. A compositionally biased stretch (basic and acidic residues) spans 321 to 336 (FKDQDLYSDKSDKEND). The interval 321–374 (FKDQDLYSDKSDKENDPEHDESDNEVLGKSEESDTDTSERQDDSYIDPEPVEPL) is disordered. A compositionally biased stretch (basic and acidic residues) spans 346–363 (VLGKSEESDTDTSERQDD). A 1,2-diacyl-sn-glycero-3-phospho-(1D-myo-inositol 4-phosphate)-binding positions include 420-425 (LSRVVL), 482-485 (KPYN), and 514-515 (HH). A 1,2-diacyl-sn-glycero-3-phospho-L-serine-binding positions include 420 to 425 (LSRVVL) and Asn485. Ser540 serves as a coordination point for a 1,2-diacyl-sn-glycero-3-phospho-L-serine. A 1,2-diacyl-sn-glycero-3-phospho-(1D-myo-inositol 4-phosphate)-binding residues include Lys706, Glu710, and Arg714. A disordered region spans residues 772 to 823 (HRTPMVSVPKMKHKPTRQQKKVVKGYSSPEPDIQDSSGSEAQSVKPSTRRKK). Over residues 781–794 (KMKHKPTRQQKKVV) the composition is skewed to basic residues. Polar residues predominate over residues 805 to 817 (QDSSGSEAQSVKP). A phosphoserine mark is found at Ser807, Ser808, Ser810, and Ser814. The helical transmembrane segment at 871 to 888 (YFVIFLLILLQVIINFIF) threads the bilayer.

This sequence belongs to the OSBP family. As to quaternary structure, interacts with SPAG5. Interacts with NUP62. In terms of tissue distribution, widely expressed. Most abundant in liver, spleen, kidney, brain and adipose tissue.

Its subcellular location is the endoplasmic reticulum membrane. The protein localises to the nucleus membrane. Functionally, lipid transporter involved in lipid countertransport between the endoplasmic reticulum and the plasma membrane: specifically exchanges phosphatidylserine with phosphatidylinositol 4-phosphate (PI4P), delivering phosphatidylserine to the plasma membrane in exchange for PI4P, which is degraded by the SAC1/SACM1L phosphatase in the endoplasmic reticulum. Binds phosphatidylserine and PI4P in a mutually exclusive manner. Binds oxysterol, 25-hydroxycholesterol and cholesterol. The polypeptide is Oxysterol-binding protein-related protein 8 (Mus musculus (Mouse)).